Reading from the N-terminus, the 314-residue chain is Tudor-interacting repair regulator protein (314 aa).

Residue Gly2 is the site of N-myristoyl glycine attachment.

Belongs to the Nudix hydrolase family. TIRR subfamily. In terms of assembly, interacts (via the cytoplasmic part) with syndecan-4 (SDC4), but not with other syndecan proteins. Myristoylated in vitro; additional evidence is however required to confirm myristoylation in vivo. In terms of tissue distribution, ubiquitously expressed. Expressed in embryonic brain, eyes, gizzard, heart, intestine, kidney, liver, tibia and skin.

Its subcellular location is the nucleus. The protein resides in the cytoplasm. It is found in the cytoskeleton. The protein localises to the cell membrane. It localises to the cell junction. Its subcellular location is the focal adhesion. Its function is as follows. Key regulator of TP53BP1 required to stabilize TP53BP1 and regulate its recruitment to chromatin. The protein is Tudor-interacting repair regulator protein (NUDT16L1) of Gallus gallus (Chicken).